Consider the following 90-residue polypeptide: Acylphosphatase (90 aa).

The 86-residue stretch at 5 to 90 folds into the Acylphosphatase-like domain; it reads CLKAWVTGRV…DPPPGTFELG (86 aa). Catalysis depends on residues Arg-20 and Asn-38.

It belongs to the acylphosphatase family.

It catalyses the reaction an acyl phosphate + H2O = a carboxylate + phosphate + H(+). The protein is Acylphosphatase (acyP) of Chromohalobacter salexigens (strain ATCC BAA-138 / DSM 3043 / CIP 106854 / NCIMB 13768 / 1H11).